Here is a 328-residue protein sequence, read N- to C-terminus: Adenosine receptor A1 (328 aa).

The Extracellular portion of the chain corresponds to 1 to 10 (MPPSISAFQA). A helical membrane pass occupies residues 11 to 33 (AYIGIEVLIALVSVPGNVLVIWA). The Cytoplasmic segment spans residues 34 to 46 (VKVNQALRDATFC). Residues 47 to 69 (FIVSLAVADVAVGALVIPLAILI) traverse the membrane as a helical segment. Residues 70–80 (NIGPETYFHTC) are Extracellular-facing. A disulfide bridge connects residues Cys80 and Cys169. The helical transmembrane segment at 81–102 (LMVACPVLILTQSSILALLAIA) threads the bilayer. The Cytoplasmic portion of the chain corresponds to 103–123 (VDRYLRVKIPLRYKAVVTPRR). The helical transmembrane segment at 124–146 (AAVAIAGCWILSLVVGLTPMFGW) threads the bilayer. The Extracellular portion of the chain corresponds to 147–176 (NNLREVQRAWAANGSVGEPVIKCEFEKVIS). Asn159 carries N-linked (GlcNAc...) asparagine glycosylation. A helical membrane pass occupies residues 177–201 (MEYMVYFNFFVWVLPPLLLMVLIYL). At 202–235 (EVFYLIRRQLSKKASASSGDPHKYYGKELKIAKS) the chain is on the cytoplasmic side. Residues 236–259 (LALILFLFALSWLPLHILNCVTLF) form a helical membrane-spanning segment. The Extracellular segment spans residues 260 to 267 (CPSCQKPS). Residues 268-292 (ILVYTAIFLTHGNSAMNPIVYAFRI) traverse the membrane as a helical segment. The Cytoplasmic segment spans residues 293–328 (HKFRVTFLKIWNDHFRCRPAPAGDGDEDLPEEKPND). The S-palmitoyl cysteine moiety is linked to residue Cys309.

Belongs to the G-protein coupled receptor 1 family.

It is found in the cell membrane. Its function is as follows. Receptor for adenosine. The activity of this receptor is mediated by G proteins which inhibit adenylyl cyclase. In Oryctolagus cuniculus (Rabbit), this protein is Adenosine receptor A1 (ADORA1).